Reading from the N-terminus, the 716-residue chain is DNA replication licensing factor MCM7 (716 aa).

Residues 178–205 (CEDCGHEIYQEVTSRVFMPLFKCPSSRC) form a C4-type zinc finger. Positions 326–531 (IYNKLSRSLA…MDSDLELAKH (206 aa)) constitute an MCM domain. 376 to 383 (GDPGVAKS) lines the ATP pocket. An Arginine finger motif is present at residues 508–511 (SRFD).

The protein belongs to the MCM family. Component of the minichromosome maintenance (MCM) complex, a heterotetramer composed of MCM2, MCM3, MCM4, MCM5, MCM6 and MCM7. Interacts with ETG1. As to expression, expressed in shoot apex and flower buds.

The protein resides in the nucleus. It is found in the cytoplasm. The enzyme catalyses ATP + H2O = ADP + phosphate + H(+). Its function is as follows. Probable component of the MCM2-7 complex (MCM complex) that may function as a DNA helicase and which is essential to undergo a single round of replication initiation and elongation per cell cycle in eukaryotic cells. Required for megagametophyte and embryo development. This chain is DNA replication licensing factor MCM7 (MCM7), found in Arabidopsis thaliana (Mouse-ear cress).